The primary structure comprises 518 residues: Protein PAC2 (518 aa).

Residues valine 23–lysine 67 form the CAP-Gly domain. 8 LRR repeats span residues asparagine 153–isoleucine 174, asparagine 179–aspartate 201, histidine 204–phenylalanine 227, threonine 229–isoleucine 252, threonine 255–leucine 276, threonine 277–serine 298, valine 299–asparagine 319, and serine 324–glutamate 345.

The protein resides in the cytoplasm. It is found in the cytoskeleton. In terms of biological role, required for viability in the absence of the kinesin-related CIN8 mitotic motor. Seems to be involved in the assembly of alpha-tubulin. The sequence is that of Protein PAC2 (PAC2) from Saccharomyces cerevisiae (strain ATCC 204508 / S288c) (Baker's yeast).